The sequence spans 328 residues: DNA-directed RNA polymerase subunit alpha 2 (328 aa).

The segment at 1–234 (MQGSVIEFLK…EQLDAFVDLR (234 aa)) is alpha N-terminal domain (alpha-NTD). The segment at 248 to 328 (FDPILLRPVD…NWPPASLSED (81 aa)) is alpha C-terminal domain (alpha-CTD).

Belongs to the RNA polymerase alpha chain family. Homodimer. The RNAP catalytic core consists of 2 alpha, 1 beta, 1 beta' and 1 omega subunit. When a sigma factor is associated with the core the holoenzyme is formed, which can initiate transcription.

It catalyses the reaction RNA(n) + a ribonucleoside 5'-triphosphate = RNA(n+1) + diphosphate. DNA-dependent RNA polymerase catalyzes the transcription of DNA into RNA using the four ribonucleoside triphosphates as substrates. The sequence is that of DNA-directed RNA polymerase subunit alpha 2 from Psychromonas ingrahamii (strain DSM 17664 / CCUG 51855 / 37).